The sequence spans 342 residues: Nicotinate-nucleotide--dimethylbenzimidazole phosphoribosyltransferase (342 aa).

Catalysis depends on Glu-311, which acts as the Proton acceptor.

This sequence belongs to the CobT family.

It catalyses the reaction 5,6-dimethylbenzimidazole + nicotinate beta-D-ribonucleotide = alpha-ribazole 5'-phosphate + nicotinate + H(+). The protein operates within nucleoside biosynthesis; alpha-ribazole biosynthesis; alpha-ribazole from 5,6-dimethylbenzimidazole: step 1/2. In terms of biological role, catalyzes the synthesis of alpha-ribazole-5'-phosphate from nicotinate mononucleotide (NAMN) and 5,6-dimethylbenzimidazole (DMB). This Vibrio atlanticus (strain LGP32) (Vibrio splendidus (strain Mel32)) protein is Nicotinate-nucleotide--dimethylbenzimidazole phosphoribosyltransferase.